A 700-amino-acid chain; its full sequence is Calpain-2 catalytic subunit (700 aa).

N-acetylalanine is present on A2. The propeptide at A2–G19 is anchors to the small subunit. The Calpain catalytic domain maps to L45–T344. Residues I89, G91, and D96 each coordinate Ca(2+). C105 is an active-site residue. Ca(2+)-binding residues include E175, Q229, and K230. Active-site residues include H262 and N286. Ca(2+) is bound by residues E292, D299, and E323. The tract at residues P345 to D514 is domain III. The linker stretch occupies residues E515–D529. The domain IV stretch occupies residues I530 to L700. Residues A542, D545, E547, E552, D585, D587, S589, K591, E596, D615, D617, S619, T621, E626, D658, and N661 each coordinate Ca(2+). 2 EF-hand domains span residues F572–Q605 and T602–K637. Residues V667 to L700 form the EF-hand 3 domain.

It belongs to the peptidase C2 family. As to quaternary structure, forms a heterodimer with a small (regulatory) subunit (CAPNS1). Interacts with CPEB3; this leads to cleavage of CPEB3. Interacts with PIDD1 alternative open reading frame protein altPIDD1. Requires Ca(2+) as cofactor. As to expression, ubiquitous.

The protein localises to the cytoplasm. It is found in the cell membrane. The catalysed reaction is Broad endopeptidase specificity.. With respect to regulation, activated by 200-1000 micromolar concentrations of calcium and inhibited by calpastatin. In terms of biological role, calcium-regulated non-lysosomal thiol-protease which catalyzes limited proteolysis of substrates involved in cytoskeletal remodeling and signal transduction. Proteolytically cleaves MYOC at 'Arg-226'. Proteolytically cleaves CPEB3 following neuronal stimulation which abolishes CPEB3 translational repressor activity, leading to translation of CPEB3 target mRNAs. This chain is Calpain-2 catalytic subunit (CAPN2), found in Homo sapiens (Human).